The following is a 170-amino-acid chain: Heat shock protein beta-7 (170 aa).

Residues 1–39 (MSHRTSSTFRAERSFHSSSSSSSSSTSSSASRALPAQDP) are disordered. The tract at residues 1-71 (MSHRTSSTFR…PLAFPARPGG (71 aa)) is required for localization to SC35 splicing speckles. The segment covering 16-31 (HSSSSSSSSSTSSSAS) has biased composition (low complexity). The 109-residue stretch at 62–170 (PLAFPARPGG…QQTFRTEIKI (109 aa)) folds into the sHSP domain.

It belongs to the small heat shock protein (HSP20) family. In terms of assembly, interacts with C-terminal domain of actin-binding protein 280. Isoform 1 is highly expressed in adult and fetal heart, skeletal muscle, and at a much lower levels in adipose tissue and in aorta. Undetectable in other tissues. Isoform 2 and isoform 3 are poorly detected in heart.

It is found in the cytoplasm. The protein localises to the nucleus. It localises to the cajal body. The chain is Heat shock protein beta-7 (HSPB7) from Homo sapiens (Human).